The sequence spans 123 residues: Ribonuclease P protein component (123 aa).

Belongs to the RnpA family. Consists of a catalytic RNA component (M1 or rnpB) and a protein subunit.

It carries out the reaction Endonucleolytic cleavage of RNA, removing 5'-extranucleotides from tRNA precursor.. RNaseP catalyzes the removal of the 5'-leader sequence from pre-tRNA to produce the mature 5'-terminus. It can also cleave other RNA substrates such as 4.5S RNA. The protein component plays an auxiliary but essential role in vivo by binding to the 5'-leader sequence and broadening the substrate specificity of the ribozyme. This is Ribonuclease P protein component from Bordetella petrii (strain ATCC BAA-461 / DSM 12804 / CCUG 43448).